An 801-amino-acid chain; its full sequence is Growth-differentiation transition protein 7 (801 aa).

An N-terminal signal peptide occupies residues 1–22; sequence MIKTILIKLILLVIFCYHFLFA.

This sequence belongs to the GDT family.

It localises to the secreted. This is Growth-differentiation transition protein 7 (gdt7) from Dictyostelium discoideum (Social amoeba).